Consider the following 261-residue polypeptide: MPCRGLHSIPAGPVEFPEIATVYVMCGEKLTVMIDAGVSNSIADFSFLDKLDYIVLTHLHIDHIGLLPELLQVYKAKVLVKSGFKKYLTSEDGLKKLNESAEKVLGDLYYVYGGLEKKLDQDKVIEVEGNEEFDLGGYRMRLIYTPGHARHHMSVLVDDFLFTGDSAGAYFNGVVIPTTPPVIDYKMYMESLKRQIELKPKVVGFAHGGLVSPKIMEEHLKQMLSKEEIQINVDIGGVAGEILRKQIEVNLRGLRESKKSI.

7 residues coordinate Zn(2+): His-58, His-60, Asp-62, His-63, His-148, Asp-165, and His-207.

This sequence belongs to the metallo-beta-lactamase superfamily. As to quaternary structure, monomer.

This Sulfurisphaera tokodaii (strain DSM 16993 / JCM 10545 / NBRC 100140 / 7) (Sulfolobus tokodaii) protein is Metallo-beta-lactamase fold-containing protein ST1585.